The sequence spans 115 residues: Nitrogen regulatory protein P-II 1 (115 aa).

Residue Tyr-54 is modified to O-UMP-tyrosine.

Belongs to the P(II) protein family.

Its function is as follows. Could be involved in the regulation of nitrogen fixation. The chain is Nitrogen regulatory protein P-II 1 from Methanothermobacter thermautotrophicus (strain ATCC 29096 / DSM 1053 / JCM 10044 / NBRC 100330 / Delta H) (Methanobacterium thermoautotrophicum).